Reading from the N-terminus, the 305-residue chain is tRNA dimethylallyltransferase 2 (305 aa).

14–21 (GPTASGKT) contacts ATP. 16-21 (TASGKT) serves as a coordination point for substrate. An interaction with substrate tRNA region spans residues 39 to 42 (DSRQ).

It belongs to the IPP transferase family. In terms of assembly, monomer. The cofactor is Mg(2+).

It carries out the reaction adenosine(37) in tRNA + dimethylallyl diphosphate = N(6)-dimethylallyladenosine(37) in tRNA + diphosphate. Functionally, catalyzes the transfer of a dimethylallyl group onto the adenine at position 37 in tRNAs that read codons beginning with uridine, leading to the formation of N6-(dimethylallyl)adenosine (i(6)A). In Trichlorobacter lovleyi (strain ATCC BAA-1151 / DSM 17278 / SZ) (Geobacter lovleyi), this protein is tRNA dimethylallyltransferase 2.